The primary structure comprises 224 residues: MDGTPGHDDMPGQPAPSRGESLWAHAEGSISEDVILAGARERATDIGAGAVTPAVGALLCLLAKLSGGKAVAEVGTGAGVSGLWLLSGMRDDGVLTTIDIEPEHLRLARQAFAEAGIGPSRTRLISGRAQEVLTRLADASYDLVFIDADPIDQPDYVAEGVRLLRSGGVIVVHRAALGGRAGDPGARDAEVIAVREAARLIAEDERLTPALVPLGDGVLAAVRD.

Residues 1–10 (MDGTPGHDDM) are compositionally biased toward basic and acidic residues. The interval 1 to 21 (MDGTPGHDDMPGQPAPSRGES) is disordered. Residues Val-51, Glu-73, 75–76 (GT), Ser-81, Asp-99, and Ile-100 contribute to the S-adenosyl-L-methionine site. Asp-147 contacts substrate. Asp-149 provides a ligand contact to S-adenosyl-L-methionine.

It belongs to the class I-like SAM-binding methyltransferase superfamily. Cation-dependent O-methyltransferase family.

This Mycobacterium tuberculosis (strain CDC 1551 / Oshkosh) protein is Putative O-methyltransferase MT1258.